A 273-amino-acid chain; its full sequence is 4-hydroxy-tetrahydrodipicolinate reductase (273 aa).

11–16 (GAGGRM) serves as a coordination point for NAD(+). An NADP(+)-binding site is contributed by Arg-37. Residues 100-102 (GTT) and 124-127 (AANY) each bind NAD(+). His-157 (proton donor/acceptor) is an active-site residue. His-158 is a (S)-2,3,4,5-tetrahydrodipicolinate binding site. Lys-161 acts as the Proton donor in catalysis. 167–168 (GT) serves as a coordination point for (S)-2,3,4,5-tetrahydrodipicolinate.

It belongs to the DapB family.

Its subcellular location is the cytoplasm. It catalyses the reaction (S)-2,3,4,5-tetrahydrodipicolinate + NAD(+) + H2O = (2S,4S)-4-hydroxy-2,3,4,5-tetrahydrodipicolinate + NADH + H(+). The catalysed reaction is (S)-2,3,4,5-tetrahydrodipicolinate + NADP(+) + H2O = (2S,4S)-4-hydroxy-2,3,4,5-tetrahydrodipicolinate + NADPH + H(+). It participates in amino-acid biosynthesis; L-lysine biosynthesis via DAP pathway; (S)-tetrahydrodipicolinate from L-aspartate: step 4/4. Catalyzes the conversion of 4-hydroxy-tetrahydrodipicolinate (HTPA) to tetrahydrodipicolinate. This chain is 4-hydroxy-tetrahydrodipicolinate reductase, found in Acinetobacter baumannii (strain AB307-0294).